A 178-amino-acid polypeptide reads, in one-letter code: Nucleoside-triphosphatase THEP1 (178 aa).

ATP-binding positions include 7–14 and 102–109; these read GEPGVGKT and VIIIDEIG.

This sequence belongs to the THEP1 NTPase family. As to quaternary structure, monomer.

The enzyme catalyses a ribonucleoside 5'-triphosphate + H2O = a ribonucleoside 5'-diphosphate + phosphate + H(+). Its function is as follows. Has nucleotide phosphatase activity towards ATP, GTP, CTP, TTP and UTP. May hydrolyze nucleoside diphosphates with lower efficiency. Does not have kinase activity. The sequence is that of Nucleoside-triphosphatase THEP1 from Aquifex aeolicus (strain VF5).